The chain runs to 767 residues: Glucoamylase S1 (767 aa).

An N-terminal signal peptide occupies residues 1 to 21 (MQRPFLLAYLVLSLLFNSALG). Disordered regions lie at residues 29-83 (RGSS…ETTI) and 125-149 (TTTV…PTTP). Over residues 30 to 48 (GSSSSNITSSGPSSTPFSS) the composition is skewed to low complexity. N-linked (GlcNAc...) asparagine glycosylation occurs at asparagine 35. Polar residues predominate over residues 49–66 (ATESFSTGTTVTPSSSKY). Low complexity-rich tracts occupy residues 71 to 83 (TETS…ETTI) and 131 to 149 (STSP…PTTP). Asparagine 308, asparagine 322, asparagine 414, asparagine 423, and asparagine 434 each carry an N-linked (GlcNAc...) asparagine glycan. The tract at residues 348–691 (VSIERIFENI…ASTTLYQLIY (344 aa)) is h subunit. Position 455 (tryptophan 455) interacts with substrate. Residue asparagine 513 is glycosylated (N-linked (GlcNAc...) asparagine). The active-site Proton acceptor is aspartate 518. The Proton donor role is filled by glutamate 521. Residues asparagine 546, asparagine 645, asparagine 650, asparagine 720, and asparagine 741 are each glycosylated (N-linked (GlcNAc...) asparagine). Residues 692–767 (RHISEQHDLV…LKATWEQTGN (76 aa)) form a y subunit region.

The protein belongs to the glycosyl hydrolase 15 family.

It carries out the reaction Hydrolysis of terminal (1-&gt;4)-linked alpha-D-glucose residues successively from non-reducing ends of the chains with release of beta-D-glucose.. This is Glucoamylase S1 (STA1) from Saccharomyces cerevisiae (Baker's yeast).